Here is a 223-residue protein sequence, read N- to C-terminus: Uracil-DNA glycosylase (223 aa).

The active-site Proton acceptor is Asp-67.

It belongs to the uracil-DNA glycosylase (UDG) superfamily. UNG family.

It is found in the cytoplasm. It catalyses the reaction Hydrolyzes single-stranded DNA or mismatched double-stranded DNA and polynucleotides, releasing free uracil.. Functionally, excises uracil residues from the DNA which can arise as a result of misincorporation of dUMP residues by DNA polymerase or due to deamination of cytosine. This Borrelia turicatae (strain 91E135) protein is Uracil-DNA glycosylase.